The sequence spans 263 residues: MEYLKRLALFISVIILTIFIMGCDSQSDTAENPKEGSKEAQIKKSFSKTLDMYPIKNLEDLYDKEGYRDGEFKKGDKGTWTISTDFAKSNKPGEMDSEGMVLHLNRNMRTATGHYTIRTTYDELGKMTREKNYRVELKNNKIVVLDKVEDVNLKHKIENFKFFSQYADFKDLKNYKNGRISINENVPYYEAEYKRNNSDGNVKKLREKYPITTKQSPILKLHIDGDIKGSSVGYKQIEYMFSKEKEDETFMSDFLNFGPSHSN.

Positions Met1–Gly22 are cleaved as a signal peptide. A lipid anchor (N-palmitoyl cysteine) is attached at Cys23. Residue Cys23 is the site of S-diacylglycerol cysteine attachment.

This sequence belongs to the staphylococcal tandem lipoprotein family.

The protein localises to the cell membrane. This is an uncharacterized protein from Staphylococcus aureus (strain MSSA476).